We begin with the raw amino-acid sequence, 291 residues long: Polyamine aminopropyltransferase (291 aa).

The region spanning 5-245 is the PABS domain; the sequence is PGPISLIEPL…YAVNYILGSL (241 aa). Glutamine 36 provides a ligand contact to S-methyl-5'-thioadenosine. The spermidine site is built by histidine 67 and glutamate 91. Residues aspartate 111 and 143 to 144 each bind S-methyl-5'-thioadenosine; that span reads DG. Residue aspartate 164 is the Proton acceptor of the active site.

Belongs to the spermidine/spermine synthase family. As to quaternary structure, homodimer or homotetramer.

The protein resides in the cytoplasm. It catalyses the reaction S-adenosyl 3-(methylsulfanyl)propylamine + putrescine = S-methyl-5'-thioadenosine + spermidine + H(+). It participates in amine and polyamine biosynthesis; spermidine biosynthesis; spermidine from putrescine: step 1/1. Its function is as follows. Catalyzes the irreversible transfer of a propylamine group from the amino donor S-adenosylmethioninamine (decarboxy-AdoMet) to putrescine (1,4-diaminobutane) to yield spermidine. The polypeptide is Polyamine aminopropyltransferase (Pyrobaculum neutrophilum (strain DSM 2338 / JCM 9278 / NBRC 100436 / V24Sta) (Thermoproteus neutrophilus)).